An 86-amino-acid polypeptide reads, in one-letter code: Collagen alpha-1(XII) chain (86 aa).

The span at 1–12 (NQPGPPGPPGPP) shows a compositional bias: pro residues. Positions 1-86 (NQPGPPGPPG…PGRPGDSGIR (86 aa)) are disordered. 14 positions are modified to hydroxyproline: Pro6, Pro9, Pro12, Pro18, Pro24, Pro27, Pro30, Pro42, Pro51, Pro54, Pro65, Pro74, Pro77, and Pro80. The segment covering 16 to 25 (GEPGPGGRPG) has biased composition (gly residues). Over residues 35–50 (PQGERGLPGEXGERGL) the composition is skewed to low complexity. Residues 57-71 (QGESRTGPPGSTGSR) show a composition bias toward low complexity.

Belongs to the fibril-associated collagens with interrupted helices (FACIT) family. In terms of assembly, trimer of identical chains each containing 190 kDa of non-triple-helical sequences. In terms of processing, the triple-helical tail is stabilized by disulfide bonds at each end. Post-translationally, prolines at the third position of the tripeptide repeating unit (G-X-Y) are hydroxylated in some or all of the chains.

The protein resides in the secreted. The protein localises to the extracellular space. It localises to the extracellular matrix. In terms of biological role, type XII collagen interacts with type I collagen-containing fibrils, the COL1 domain could be associated with the surface of the fibrils, and the COL2 and NC3 domains may be localized in the perifibrillar matrix. This chain is Collagen alpha-1(XII) chain (COL12A1), found in Bos taurus (Bovine).